The chain runs to 446 residues: tRNA-2-methylthio-N(6)-dimethylallyladenosine synthase (446 aa).

One can recognise an MTTase N-terminal domain in the interval 3-120 (QKLFIKTYGC…LPEMVNSVAH (118 aa)). Cysteine 12, cysteine 49, cysteine 83, cysteine 157, cysteine 161, and cysteine 164 together coordinate [4Fe-4S] cluster. The 233-residue stretch at 143–375 (SSEGASAFVS…QQRILQFAQD (233 aa)) folds into the Radical SAM core domain. One can recognise a TRAM domain in the interval 378–442 (RKMVGSTQRI…PNSLRGERVD (65 aa)).

This sequence belongs to the methylthiotransferase family. MiaB subfamily. Monomer. The cofactor is [4Fe-4S] cluster.

The protein localises to the cytoplasm. The enzyme catalyses N(6)-dimethylallyladenosine(37) in tRNA + (sulfur carrier)-SH + AH2 + 2 S-adenosyl-L-methionine = 2-methylsulfanyl-N(6)-dimethylallyladenosine(37) in tRNA + (sulfur carrier)-H + 5'-deoxyadenosine + L-methionine + A + S-adenosyl-L-homocysteine + 2 H(+). Catalyzes the methylthiolation of N6-(dimethylallyl)adenosine (i(6)A), leading to the formation of 2-methylthio-N6-(dimethylallyl)adenosine (ms(2)i(6)A) at position 37 in tRNAs that read codons beginning with uridine. The chain is tRNA-2-methylthio-N(6)-dimethylallyladenosine synthase from Hahella chejuensis (strain KCTC 2396).